A 1225-amino-acid chain; its full sequence is NHS-like protein 2 (1225 aa).

Disordered stretches follow at residues 161 to 180 (TFRSSDEATKPTPNPRPQSA), 193 to 213 (QLSEDETTTQGVRAPEASLSL), 291 to 371 (NFSQ…ESMG), 466 to 510 (HMPE…TTDV), 543 to 632 (LSAQ…PEST), 670 to 766 (QGSS…KFPK), 812 to 1009 (KTNP…KKPS), 1042 to 1093 (DTKC…DKTA), and 1128 to 1203 (KEPG…KTTN). Polar residues-rich tracts occupy residues 291-315 (NFSQRDQGHSNSPAGSVAHSTTSDI) and 339-350 (SLTSPVLRTPSS). The residue at position 500 (serine 500) is a Phosphoserine. The segment covering 552–568 (RRQRSKSISLRKAKKKP) has biased composition (basic residues). Serine 576 carries the phosphoserine modification. The segment covering 675–688 (SLASPSTSRATTPS) has biased composition (low complexity). Phosphoserine is present on serine 691. Composition is skewed to polar residues over residues 710-730 (SPSSGYSSQSETPTPTVSMSL) and 812-827 (KTNPNQPIMPMVTQSD). The span at 841-851 (PEDDIESPEYA) shows a compositional bias: acidic residues. Over residues 852-867 (EEPRAEEVFTLPERKT) the composition is skewed to basic and acidic residues. Polar residues-rich tracts occupy residues 939 to 968 (GESTAPSSLVFTPFASSSDAFFSGTQQPPQ) and 1054 to 1065 (SLGQRVTSTPQA). At serine 1054 the chain carries Phosphoserine. The segment covering 1082–1093 (TEEKSLISDKTA) has biased composition (basic and acidic residues). A compositionally biased stretch (polar residues) spans 1138-1155 (RTSSHSPIKNTAESPISE). Low complexity predominate over residues 1156 to 1166 (STATAGSGSSA).

It belongs to the NHS family.

The chain is NHS-like protein 2 from Homo sapiens (Human).